Here is a 175-residue protein sequence, read N- to C-terminus: Inosine/xanthosine triphosphatase (175 aa).

A substrate-binding site is contributed by 8–13; sequence TTNPAK. 2 residues coordinate Mg(2+): Asp-38 and Glu-68. 68-69 contacts substrate; sequence EA.

Belongs to the YjjX NTPase family. In terms of assembly, homodimer. Requires Mg(2+) as cofactor. The cofactor is Mn(2+).

The catalysed reaction is XTP + H2O = XDP + phosphate + H(+). It carries out the reaction ITP + H2O = IDP + phosphate + H(+). Phosphatase that hydrolyzes non-canonical purine nucleotides such as XTP and ITP to their respective diphosphate derivatives. Probably excludes non-canonical purines from DNA/RNA precursor pool, thus preventing their incorporation into DNA/RNA and avoiding chromosomal lesions. The chain is Inosine/xanthosine triphosphatase from Yersinia enterocolitica serotype O:8 / biotype 1B (strain NCTC 13174 / 8081).